We begin with the raw amino-acid sequence, 297 residues long: Lipoyl synthase (297 aa).

[4Fe-4S] cluster contacts are provided by Cys40, Cys45, Cys51, Cys67, Cys71, Cys74, and Ser280. Residues 53–269 enclose the Radical SAM core domain; it reads AVRKTATFMI…KEIALSKGFS (217 aa).

Belongs to the radical SAM superfamily. Lipoyl synthase family. [4Fe-4S] cluster serves as cofactor.

It localises to the cytoplasm. It catalyses the reaction [[Fe-S] cluster scaffold protein carrying a second [4Fe-4S](2+) cluster] + N(6)-octanoyl-L-lysyl-[protein] + 2 oxidized [2Fe-2S]-[ferredoxin] + 2 S-adenosyl-L-methionine + 4 H(+) = [[Fe-S] cluster scaffold protein] + N(6)-[(R)-dihydrolipoyl]-L-lysyl-[protein] + 4 Fe(3+) + 2 hydrogen sulfide + 2 5'-deoxyadenosine + 2 L-methionine + 2 reduced [2Fe-2S]-[ferredoxin]. The protein operates within protein modification; protein lipoylation via endogenous pathway; protein N(6)-(lipoyl)lysine from octanoyl-[acyl-carrier-protein]. Its function is as follows. Catalyzes the radical-mediated insertion of two sulfur atoms into the C-6 and C-8 positions of the octanoyl moiety bound to the lipoyl domains of lipoate-dependent enzymes, thereby converting the octanoylated domains into lipoylated derivatives. The sequence is that of Lipoyl synthase from Bacillus cereus (strain ATCC 14579 / DSM 31 / CCUG 7414 / JCM 2152 / NBRC 15305 / NCIMB 9373 / NCTC 2599 / NRRL B-3711).